An 89-amino-acid polypeptide reads, in one-letter code: Small ribosomal subunit protein uS15 (89 aa).

Belongs to the universal ribosomal protein uS15 family. Part of the 30S ribosomal subunit. Forms a bridge to the 50S subunit in the 70S ribosome, contacting the 23S rRNA.

Its function is as follows. One of the primary rRNA binding proteins, it binds directly to 16S rRNA where it helps nucleate assembly of the platform of the 30S subunit by binding and bridging several RNA helices of the 16S rRNA. Forms an intersubunit bridge (bridge B4) with the 23S rRNA of the 50S subunit in the ribosome. This Acaryochloris marina (strain MBIC 11017) protein is Small ribosomal subunit protein uS15.